A 263-amino-acid polypeptide reads, in one-letter code: Probable endonuclease lcl3 (263 aa).

The interval 1 to 21 is disordered; the sequence is MGWLDFSSKSKKEEKDDTRPS. Over residues 8 to 19 the composition is skewed to basic and acidic residues; sequence SKSKKEEKDDTR. The chain crosses the membrane as a helical span at residues 41–59; it reads TVIPTILLTTTILVSTRLY. The TNase-like domain occupies 80-240; it reads RSLFGTVTRV…KKKKLGMWSG (161 aa). Arginine 131 is an active-site residue. Aspartate 136 provides a ligand contact to Ca(2+). Active-site residues include glutamate 139 and arginine 179. The disordered stretch occupies residues 236 to 263; that stretch reads GMWSGKKKDYESPRDYKTRTANAAKMLK. The segment covering 241–253 has biased composition (basic and acidic residues); that stretch reads KKKDYESPRDYKT.

It belongs to the LCL3 family.

It is found in the mitochondrion. The protein resides in the membrane. This Botryotinia fuckeliana (strain B05.10) (Noble rot fungus) protein is Probable endonuclease lcl3 (lcl3).